The chain runs to 377 residues: Chaperone protein DnaJ 1 (377 aa).

Positions 4–68 constitute a J domain; it reads DYYQTLGVTR…EIRQRYDQFG (65 aa). The CR-type zinc-finger motif lies at 136-218; it reads GGEKEIRIPH…CNGVGRKQET (83 aa). Positions 149, 152, 166, 169, 192, 195, 206, and 209 each coordinate Zn(2+). 4 CXXCXGXG motif repeats span residues 149-156, 166-173, 192-199, and 206-213; these read CQVCEGTG, CGTCNGAG, CPTCNGSG, and CEACNGVG.

This sequence belongs to the DnaJ family. In terms of assembly, homodimer. Requires Zn(2+) as cofactor.

It localises to the cytoplasm. Participates actively in the response to hyperosmotic and heat shock by preventing the aggregation of stress-denatured proteins and by disaggregating proteins, also in an autonomous, DnaK-independent fashion. Unfolded proteins bind initially to DnaJ; upon interaction with the DnaJ-bound protein, DnaK hydrolyzes its bound ATP, resulting in the formation of a stable complex. GrpE releases ADP from DnaK; ATP binding to DnaK triggers the release of the substrate protein, thus completing the reaction cycle. Several rounds of ATP-dependent interactions between DnaJ, DnaK and GrpE are required for fully efficient folding. Also involved, together with DnaK and GrpE, in the DNA replication of plasmids through activation of initiation proteins. This is Chaperone protein DnaJ 1 from Synechocystis sp. (strain ATCC 27184 / PCC 6803 / Kazusa).